An 88-amino-acid polypeptide reads, in one-letter code: Elongation factor 1-beta (88 aa).

Belongs to the EF-1-beta/EF-1-delta family.

Functionally, promotes the exchange of GDP for GTP in EF-1-alpha/GDP, thus allowing the regeneration of EF-1-alpha/GTP that could then be used to form the ternary complex EF-1-alpha/GTP/AAtRNA. This chain is Elongation factor 1-beta, found in Haloarcula marismortui (strain ATCC 43049 / DSM 3752 / JCM 8966 / VKM B-1809) (Halobacterium marismortui).